A 616-amino-acid chain; its full sequence is Chaperone protein HscA homolog (616 aa).

This sequence belongs to the heat shock protein 70 family.

In terms of biological role, chaperone involved in the maturation of iron-sulfur cluster-containing proteins. Has a low intrinsic ATPase activity which is markedly stimulated by HscB. In Aliivibrio fischeri (strain MJ11) (Vibrio fischeri), this protein is Chaperone protein HscA homolog.